The sequence spans 537 residues: Beta-arabinofuranosyltransferase RAY1 (537 aa).

A DXD motif motif is present at residues D370 to D372.

Belongs to the glycosyltransferase 77 family.

Functionally, beta-arabinofuranosyltransferase that transfers specifically an arabinosyl residue from UDP-arabinofuranose to the monosaccharide galactose or beta-methyl-galactoside in vitro. Catalyzes the addition of a beta-arabinofuranose residue onto a beta-galactosyl residue of an Yariv-precipitable wall polymer in vivo. This chain is Beta-arabinofuranosyltransferase RAY1, found in Arabidopsis thaliana (Mouse-ear cress).